Reading from the N-terminus, the 1142-residue chain is Coiled-coil domain-containing protein 40 (1142 aa).

Disordered stretches follow at residues 1-197 (MAEP…QVLP) and 251-274 (PSTE…AEDE). Composition is skewed to basic and acidic residues over residues 11-27 (SHPE…EGNN) and 35-55 (PEKD…HPEE). The segment covering 63 to 96 (AIEEGEVETEGEAAVEGEEEAVSYGDAESEEEYY) has biased composition (acidic residues). The residue at position 252 (Ser252) is a Phosphoserine. Positions 265 to 274 (EGSDEEAEDE) are enriched in acidic residues. Coiled-coil stretches lie at residues 293–319 (AALK…ATKQ), 349–470 (HDRH…QAED), 526–627 (QAKS…LRRK), 684–950 (TSSR…LGQL), and 1005–1054 (VRKA…LTRL).

It belongs to the CCDC40 family.

The protein resides in the cytoplasm. It localises to the cell projection. Its subcellular location is the cilium. Functionally, required for assembly of dynein regulatory complex (DRC) and inner dynein arm (IDA) complexes, which are responsible for ciliary beat regulation, thereby playing a central role in motility in cilia and flagella. Probably acts together with CCDC39 to form a molecular ruler that determines the 96 nanometer (nm) repeat length and arrangements of components in cilia and flagella. Not required for outer dynein arm complexes assembly. Required for axonemal recruitment of CCDC39. This is Coiled-coil domain-containing protein 40 from Homo sapiens (Human).